A 345-amino-acid chain; its full sequence is Fibronectin type 3 and ankyrin repeat domains protein 1 (345 aa).

One can recognise a Fibronectin type-III domain in the interval Pro-8–Pro-108. ANK repeat units lie at residues Ile-109–Val-139, Phe-143–Leu-172, Ser-176–Ala-205, Gly-209–Val-238, Ser-243–Val-273, and Asn-277–Val-306.

Interacts with COPS5; regulates the phosphorylation of JUN and the transcriptional activity of AP-1. Interacts with RYBP; may prevent the ubiquitin-mediated proteasomal degradation of FANK1. Post-translationally, polyubiquitinated. Polyubiquitination leads to proteasomal degradation. Mostly restricted to testis.

The protein resides in the nucleus. It is found in the cytoplasm. It localises to the cytosol. The protein localises to the cytoskeleton. Its subcellular location is the cilium basal body. The protein resides in the cell projection. It is found in the cilium. Its function is as follows. Through the activation of JUN and AP-1-mediated transcription, may regulate apoptosis. The chain is Fibronectin type 3 and ankyrin repeat domains protein 1 from Homo sapiens (Human).